Reading from the N-terminus, the 257-residue chain is UPF0246 protein CLH_2088 (257 aa).

This sequence belongs to the UPF0246 family.

This chain is UPF0246 protein CLH_2088, found in Clostridium botulinum (strain Alaska E43 / Type E3).